Consider the following 984-residue polypeptide: Ephrin type-B receptor 1 (984 aa).

An N-terminal signal peptide occupies residues 1–17 (MALDCLLLFLLASAVAA). Residues 18-540 (MEETLMDTRT…YKSELREQLP (523 aa)) lie on the Extracellular side of the membrane. Residues 19-201 (EETLMDTRTA…FFKKCPSIVQ (183 aa)) form the Eph LBD domain. 2 Fibronectin type-III domains span residues 322–432 (VPSG…TNQA) and 433–528 (APST…TLTD). N-linked (GlcNAc...) asparagine glycosylation is found at N334, N426, and N480. Residues 541–563 (LIAGSAAAGVVFVVSLVAISIVC) traverse the membrane as a helical segment. The Cytoplasmic portion of the chain corresponds to 564–984 (SRKRAYSKEA…QMNQSPSVMA (421 aa)). Y600 carries the phosphotyrosine modification. Residues 619–882 (VKIEEVIGAG…EIVNTLDKMI (264 aa)) form the Protein kinase domain. ATP is bound by residues 625–633 (IGAGEFGEV) and K651. Catalysis depends on D744, which acts as the Proton acceptor. Residues 911 to 975 (TAFTTVDDWL…LSSIHSMRVQ (65 aa)) enclose the SAM domain. Y928 bears the Phosphotyrosine; by autocatalysis mark. Residues 982–984 (VMA) carry the PDZ-binding motif.

Belongs to the protein kinase superfamily. Tyr protein kinase family. Ephrin receptor subfamily. Heterotetramer upon binding of the ligand. The heterotetramer is composed of an ephrin dimer and a receptor dimer. Oligomerization is probably required to induce biological responses. Interacts with EPHB6; transphosphorylates EPHB6 to form an active signaling complex. Interacts with PICK1. Interacts (through Tyr-594) with NCK1 (via SH2 domain); activates the JUN cascade to regulate cell adhesion. The ligand-activated form interacts (through Tyr-928) with GRB7 and GRB10 (via SH2 domains). The ligand-activated form interacts (residues within the catalytic domain) with GRB2 (via SH2 domain). Interacts with GRB2, SHC1 and SRC; activates the MAPK/ERK cascade to regulate cell migration. Interacts with CBL; regulates receptor degradation through ubiquitination. Interacts with ACP1. In terms of processing, phosphorylated. Autophosphorylation is stimulated by the ligand EFNB1. Required for interaction with SH2 domain-containing interactors, for activation of the MAPK/ERK and JUN signaling cascades and for ubiquitination by CBL. Ubiquitinated; (EFNB1)ligand-induced poly- and/or multi-ubiquitination by CBL is regulated by SRC and leads to lysosomal degradation. In terms of tissue distribution, restricted to brain and testes.

It localises to the cell membrane. The protein resides in the early endosome membrane. It is found in the cell projection. The protein localises to the dendrite. The enzyme catalyses L-tyrosyl-[protein] + ATP = O-phospho-L-tyrosyl-[protein] + ADP + H(+). Receptor tyrosine kinase which binds promiscuously transmembrane ephrin-B family ligands residing on adjacent cells, leading to contact-dependent bidirectional signaling into neighboring cells. The signaling pathway downstream of the receptor is referred to as forward signaling while the signaling pathway downstream of the ephrin ligand is referred to as reverse signaling. Cognate/functional ephrin ligands for this receptor include EFNB1, EFNB2 and EFNB3. During nervous system development, regulates retinal axon guidance redirecting ipsilaterally ventrotemporal retinal ganglion cells axons at the optic chiasm midline. This probably requires repulsive interaction with EFNB2. In the adult nervous system together with EFNB3, regulates chemotaxis, proliferation and polarity of the hippocampus neural progenitors. In addition to its role in axon guidance also plays an important redundant role with other ephrin-B receptors in development and maturation of dendritic spines and synapse formation. May also regulate angiogenesis. More generally, may play a role in targeted cell migration and adhesion. Upon activation by EFNB1 and probably other ephrin-B ligands activates the MAPK/ERK and the JNK signaling cascades to regulate cell migration and adhesion respectively. Involved in the maintenance of the pool of satellite cells (muscle stem cells) by promoting their self-renewal and reducing their activation and differentiation. This is Ephrin type-B receptor 1 (Ephb1) from Rattus norvegicus (Rat).